A 125-amino-acid polypeptide reads, in one-letter code: Small ribosomal subunit protein uS11 (125 aa).

Residues 101–125 form a disordered region; the sequence is KDVKDVTPTPHNGTRPPKKILKREK. The span at 116–125 shows a compositional bias: basic residues; the sequence is PPKKILKREK.

The protein belongs to the universal ribosomal protein uS11 family. Part of the 30S ribosomal subunit. Interacts with proteins S7 and S18. Binds to IF-3.

Located on the platform of the 30S subunit, it bridges several disparate RNA helices of the 16S rRNA. Forms part of the Shine-Dalgarno cleft in the 70S ribosome. The sequence is that of Small ribosomal subunit protein uS11 from Mycoplasma sp.